Here is a 627-residue protein sequence, read N- to C-terminus: DNA mismatch repair protein MutL (627 aa).

A disordered region spans residues 376–404; it reads APASTNEVREGSAARAGNYQPPEPPSREA.

This sequence belongs to the DNA mismatch repair MutL/HexB family.

This protein is involved in the repair of mismatches in DNA. It is required for dam-dependent methyl-directed DNA mismatch repair. May act as a 'molecular matchmaker', a protein that promotes the formation of a stable complex between two or more DNA-binding proteins in an ATP-dependent manner without itself being part of a final effector complex. This chain is DNA mismatch repair protein MutL, found in Aeromonas salmonicida (strain A449).